A 127-amino-acid polypeptide reads, in one-letter code: Aspartate 1-decarboxylase (127 aa).

Catalysis depends on Ser25, which acts as the Schiff-base intermediate with substrate; via pyruvic acid. Ser25 bears the Pyruvic acid (Ser) mark. Substrate is bound at residue Thr57. The Proton donor role is filled by Tyr58. Residue 73 to 75 participates in substrate binding; it reads GAA.

This sequence belongs to the PanD family. Heterooctamer of four alpha and four beta subunits. Requires pyruvate as cofactor. Post-translationally, is synthesized initially as an inactive proenzyme, which is activated by self-cleavage at a specific serine bond to produce a beta-subunit with a hydroxyl group at its C-terminus and an alpha-subunit with a pyruvoyl group at its N-terminus.

Its subcellular location is the cytoplasm. It carries out the reaction L-aspartate + H(+) = beta-alanine + CO2. It functions in the pathway cofactor biosynthesis; (R)-pantothenate biosynthesis; beta-alanine from L-aspartate: step 1/1. Catalyzes the pyruvoyl-dependent decarboxylation of aspartate to produce beta-alanine. The protein is Aspartate 1-decarboxylase of Bacillus cytotoxicus (strain DSM 22905 / CIP 110041 / 391-98 / NVH 391-98).